Here is a 637-residue protein sequence, read N- to C-terminus: 5-hmdU DNA kinase (637 aa).

The segment at 249-269 (AEKGVKRGKKGRKTSPVAKTL) is disordered.

The protein belongs to the thymidylate kinase family. 5-hmdU DNA kinase subfamily.

It carries out the reaction 5-hydroxymethyl-dUMP in DNA + ATP = 5-phosphomethyl-dUMP in DNA + ADP + H(+). Phosphorylates 5-hydroxymethyluracil (5hmdU) into 5-phosphomethyl-2'-deoxyuridine (5- PmdU) on DNA as a step in the pathway leading to thymidine hypermodifications in the viral genome. The phosphate is added internally to the DNA polymer. As a final result of the pathway of hypermodification, alpha-glutamylthymidine (YdTMP) substitutes for about 20% of the thymidines in the viral DNA, the 80% left are dTMP. These modifications probably prevent degradation of viral genome by the host restriction-modification antiviral defense system. The protein is 5-hmdU DNA kinase of Bacillus phage SP10 (Bacillus phage SP-10).